A 99-amino-acid polypeptide reads, in one-letter code: Co-chaperonin GroES (99 aa).

Belongs to the GroES chaperonin family. In terms of assembly, heptamer of 7 subunits arranged in a ring. Interacts with the chaperonin GroEL.

The protein resides in the cytoplasm. Together with the chaperonin GroEL, plays an essential role in assisting protein folding. The GroEL-GroES system forms a nano-cage that allows encapsulation of the non-native substrate proteins and provides a physical environment optimized to promote and accelerate protein folding. GroES binds to the apical surface of the GroEL ring, thereby capping the opening of the GroEL channel. In Methylacidiphilum infernorum (isolate V4) (Methylokorus infernorum (strain V4)), this protein is Co-chaperonin GroES.